Reading from the N-terminus, the 694-residue chain is Glycine--tRNA ligase beta subunit (694 aa).

Belongs to the class-II aminoacyl-tRNA synthetase family. Tetramer of two alpha and two beta subunits.

The protein localises to the cytoplasm. The catalysed reaction is tRNA(Gly) + glycine + ATP = glycyl-tRNA(Gly) + AMP + diphosphate. This Moorella thermoacetica (strain ATCC 39073 / JCM 9320) protein is Glycine--tRNA ligase beta subunit.